Reading from the N-terminus, the 485-residue chain is Aspartyl/glutamyl-tRNA(Asn/Gln) amidotransferase subunit B (485 aa).

This sequence belongs to the GatB/GatE family. GatB subfamily. As to quaternary structure, heterotrimer of A, B and C subunits.

It carries out the reaction L-glutamyl-tRNA(Gln) + L-glutamine + ATP + H2O = L-glutaminyl-tRNA(Gln) + L-glutamate + ADP + phosphate + H(+). The catalysed reaction is L-aspartyl-tRNA(Asn) + L-glutamine + ATP + H2O = L-asparaginyl-tRNA(Asn) + L-glutamate + ADP + phosphate + 2 H(+). In terms of biological role, allows the formation of correctly charged Asn-tRNA(Asn) or Gln-tRNA(Gln) through the transamidation of misacylated Asp-tRNA(Asn) or Glu-tRNA(Gln) in organisms which lack either or both of asparaginyl-tRNA or glutaminyl-tRNA synthetases. The reaction takes place in the presence of glutamine and ATP through an activated phospho-Asp-tRNA(Asn) or phospho-Glu-tRNA(Gln). The protein is Aspartyl/glutamyl-tRNA(Asn/Gln) amidotransferase subunit B of Borrelia garinii subsp. bavariensis (strain ATCC BAA-2496 / DSM 23469 / PBi) (Borreliella bavariensis).